Reading from the N-terminus, the 211-residue chain is Probable nicotinate-nucleotide adenylyltransferase (211 aa).

This sequence belongs to the NadD family.

It catalyses the reaction nicotinate beta-D-ribonucleotide + ATP + H(+) = deamido-NAD(+) + diphosphate. It functions in the pathway cofactor biosynthesis; NAD(+) biosynthesis; deamido-NAD(+) from nicotinate D-ribonucleotide: step 1/1. Its function is as follows. Catalyzes the reversible adenylation of nicotinate mononucleotide (NaMN) to nicotinic acid adenine dinucleotide (NaAD). The chain is Probable nicotinate-nucleotide adenylyltransferase from Wigglesworthia glossinidia brevipalpis.